We begin with the raw amino-acid sequence, 358 residues long: Tripartite motif-containing protein 54 (358 aa).

Residues 26 to 82 (CPICLEMFSKPVVILPCQHNLCRKCANDVFQASNPLWQSRGSTTVSSGGRFRCPSCR) form an RING-type zinc finger. The B box-type zinc finger occupies 121-163 (EQHLMCEEHEEEKINIYCLSCEVPTCSLCKVFGAHKDCEVAPL). Positions 126, 129, 149, and 155 each coordinate Zn(2+). The tract at residues 168 to 211 (KRQKSELSDGIAMLVAGNDRVQAVITQMEEVCQTIEDNSRRQKQ) is mediates microtubule-binding and homooligomerization. Residues 194–258 (QMEEVCQTIE…LIRQYGDHLE (65 aa)) adopt a coiled-coil conformation. Positions 271–329 (MEEPQMALYLQQAKELINKVGAMSKVELAGRPEPGYESMEQFTVSVEHVAEMLRTIDFQ) constitute a COS domain. The interval 326–358 (IDFQPGASGEEEEVAPDGDEGSAGQEEERPDGP) is disordered. Residues 334–345 (GEEEEVAPDGDE) are compositionally biased toward acidic residues.

In terms of assembly, homooligomer and heterooligomer. Interacts with TRIM63 and probably with TRIM55. Interacts with tubulin.

Its subcellular location is the cytoplasm. It localises to the cytoskeleton. The protein localises to the myofibril. The protein resides in the sarcomere. It is found in the z line. Functionally, may bind and stabilize microtubules during myotubes formation. The sequence is that of Tripartite motif-containing protein 54 (TRIM54) from Pongo abelii (Sumatran orangutan).